The chain runs to 423 residues: Hydroxymethylglutaryl-CoA synthase-like protein AKT4-1 (423 aa).

Belongs to the thiolase-like superfamily. HMG-CoA synthase family.

It functions in the pathway mycotoxin biosynthesis. Functionally, hydroxymethylglutaryl-CoA synthase-like protein; part of the gene clusters that mediate the biosynthesis of the host-selective toxins (HSTs) AK-toxins responsible for Japanese pear black spot disease by the Japanese pear pathotype. AK-toxins are esters of 9,10-epoxy 8-hydroxy 9-methyldecatrienoic acid (EDA). On cellular level, AK-toxins affect plasma membrane of susceptible cells and cause a sudden increase in loss of K(+) after a few minutes of toxin treatment. The acyl-CoA ligase AKT1, the hydrolase AKT2 and enoyl-CoA hydratase AKT3 are all involved in the biosynthesis of the AK-, AF- and ACT-toxin common 9,10-epoxy-8-hydroxy-9-methyl-decatrienoic acid (EDA) structural moiety. Part of the EDA biosynthesis occurs in the peroxisome since these 3 enzymes are localized in peroxisomes. The exact roles of the 3 enzymes, as well as of additional AK-toxin clusters enzymes, including AKT4, AKT6 and AKTS1, have still to be elucidated. The Cytochrome P450 monooxygenase AKT7 on the other side functions to limit production of EDA and AK-toxin, probably via the catalysis of a side reaction of EDA or its precursor. The polypeptide is Hydroxymethylglutaryl-CoA synthase-like protein AKT4-1 (Alternaria alternata (Alternaria rot fungus)).